A 266-amino-acid polypeptide reads, in one-letter code: Ribosomal RNA small subunit methyltransferase A (266 aa).

S-adenosyl-L-methionine is bound by residues N10, I12, G37, E58, D82, and N105.

It belongs to the class I-like SAM-binding methyltransferase superfamily. rRNA adenine N(6)-methyltransferase family. RsmA subfamily.

It is found in the cytoplasm. The catalysed reaction is adenosine(1518)/adenosine(1519) in 16S rRNA + 4 S-adenosyl-L-methionine = N(6)-dimethyladenosine(1518)/N(6)-dimethyladenosine(1519) in 16S rRNA + 4 S-adenosyl-L-homocysteine + 4 H(+). Its function is as follows. Specifically dimethylates two adjacent adenosines (A1518 and A1519) in the loop of a conserved hairpin near the 3'-end of 16S rRNA in the 30S particle. May play a critical role in biogenesis of 30S subunits. This chain is Ribosomal RNA small subunit methyltransferase A, found in Mycoplasma capricolum subsp. capricolum (strain California kid / ATCC 27343 / NCTC 10154).